A 231-amino-acid chain; its full sequence is Small ribosomal subunit protein bS18c (231 aa).

Disordered stretches follow at residues 1-31 (MEKS…PIES) and 95-231 (QKEE…TRKK). The span at 9–26 (IKKKRPFRKKKRSFRKRR) shows a compositional bias: basic residues. 3 stretches are compositionally biased toward basic and acidic residues: residues 95–151 (QKEE…EFQR), 159–169 (TNEKQTNEKQT), and 212–231 (TNEK…TRKK).

It belongs to the bacterial ribosomal protein bS18 family. In terms of assembly, part of the 30S ribosomal subunit.

The protein resides in the plastid. The protein localises to the chloroplast. The polypeptide is Small ribosomal subunit protein bS18c (Jasminum nudiflorum (Winter jasmine)).